The sequence spans 143 residues: MAKKIVGYIKLQVPAGKANPSPPIGPALGQRGLNIMEFCKAFNAQTQGMEPGMPIPVVITAYADKSFTFTMKTPPATFLLKKAAGIKSGSAKAHVDKVGKVTRAQLEEIAKTKQADLTAADLDAAVRTIAGSARSMGLEVEGV.

Belongs to the universal ribosomal protein uL11 family. In terms of assembly, part of the ribosomal stalk of the 50S ribosomal subunit. Interacts with L10 and the large rRNA to form the base of the stalk. L10 forms an elongated spine to which L12 dimers bind in a sequential fashion forming a multimeric L10(L12)X complex. In terms of processing, one or more lysine residues are methylated.

Its function is as follows. Forms part of the ribosomal stalk which helps the ribosome interact with GTP-bound translation factors. In Chromobacterium violaceum (strain ATCC 12472 / DSM 30191 / JCM 1249 / CCUG 213 / NBRC 12614 / NCIMB 9131 / NCTC 9757 / MK), this protein is Large ribosomal subunit protein uL11.